A 226-amino-acid chain; its full sequence is Ras-related protein Rab11A (226 aa).

Residues Gly-24 to Gln-32, Ser-43 to Thr-49, Asp-72 to Gln-76, Asn-130 to Asp-133, and Ser-160 to Leu-162 each bind GTP. The Effector region signature appears at Ser-46–Phe-54. 2 S-geranylgeranyl cysteine lipidation sites follow: Cys-222 and Cys-223. Cysteine methyl ester is present on Cys-223. A propeptide spans Gln-224–Ser-226 (removed in mature form).

Belongs to the small GTPase superfamily. Rab family.

The protein localises to the cell membrane. The polypeptide is Ras-related protein Rab11A (RAB11A) (Lotus japonicus (Lotus corniculatus var. japonicus)).